We begin with the raw amino-acid sequence, 685 residues long: Probable transketolase (685 aa).

His32 contributes to the substrate binding site. Thiamine diphosphate-binding positions include His72 and Gly121–Leu123. Asp162 provides a ligand contact to Mg(2+). Positions 163 and 192 each coordinate thiamine diphosphate. Asn192 and Ile194 together coordinate Mg(2+). Substrate contacts are provided by His268, Arg363, and Ser390. His268 contributes to the thiamine diphosphate binding site. Glu422 and Phe448 together coordinate thiamine diphosphate. Catalysis depends on Glu422, which acts as the Proton donor. Residues His472, Asp480, and Arg531 each contribute to the substrate site.

This sequence belongs to the transketolase family. Homodimer. The cofactor is Mg(2+). It depends on Ca(2+) as a cofactor. Mn(2+) is required as a cofactor. Requires Co(2+) as cofactor. Thiamine diphosphate serves as cofactor.

It carries out the reaction D-sedoheptulose 7-phosphate + D-glyceraldehyde 3-phosphate = aldehydo-D-ribose 5-phosphate + D-xylulose 5-phosphate. In terms of biological role, catalyzes the transfer of a two-carbon ketol group from a ketose donor to an aldose acceptor, via a covalent intermediate with the cofactor thiamine pyrophosphate. This chain is Probable transketolase, found in Schizosaccharomyces pombe (strain 972 / ATCC 24843) (Fission yeast).